Consider the following 288-residue polypeptide: ATP synthase gamma chain (288 aa).

It belongs to the ATPase gamma chain family. In terms of assembly, F-type ATPases have 2 components, CF(1) - the catalytic core - and CF(0) - the membrane proton channel. CF(1) has five subunits: alpha(3), beta(3), gamma(1), delta(1), epsilon(1). CF(0) has three main subunits: a, b and c.

Its subcellular location is the cell inner membrane. Produces ATP from ADP in the presence of a proton gradient across the membrane. The gamma chain is believed to be important in regulating ATPase activity and the flow of protons through the CF(0) complex. This is ATP synthase gamma chain from Rickettsia typhi (strain ATCC VR-144 / Wilmington).